The primary structure comprises 1065 residues: FERM, ARHGEF and pleckstrin domain-containing protein 2 (1065 aa).

Positions 44-324 (MRIRVKLLDS…EYHTFFRLSD (281 aa)) constitute an FERM domain. Phosphoserine is present on residues S389 and S440. Disordered stretches follow at residues 406-489 (SFYP…LKSH) and 504-534 (EQGA…HKHM). Low complexity predominate over residues 440 to 459 (STAAERSSGPSSSDGPSTQS). Residues 524 to 534 (DNQEEQKHKHM) are compositionally biased toward basic and acidic residues. Residues 538 to 729 (EAYFIAKEIL…TEVTTELQQS (192 aa)) enclose the DH domain. The PH 1 domain occupies 758–855 (EFIREGCLHK…WMQDLNAAIQ (98 aa)). 2 positions are modified to phosphoserine: S863 and S880. The segment at 874-902 (TRTPRSSDEVSLEESEDGRGNRGSLEGNS) is disordered. A PH 2 domain is found at 930–1027 (ENQLSGYLLR…WMDVIKRASS (98 aa)).

In terms of assembly, interacts with PLXNA1. Interaction with PLXNA1 or PIP5K1C lowers its guanine nucleotide exchange activity. Dissociates from PLXNA1 when SEMA3A binds to the receptor. Interacts with PIP5K1C via its FERM domain. The interaction with PIP5K1C is enhanced by SEMA3A binding. Interacts with RAC1. In terms of tissue distribution, detected in adult brain, lung and testis. Detected in embryonic hippocampus and brain cortex.

Functionally, functions as a guanine nucleotide exchange factor that activates RAC1. May have relatively low activity. Plays a role in the response to class 3 semaphorins and remodeling of the actin cytoskeleton. Plays a role in TNFSF11-mediated osteoclast differentiation, especially in podosome rearrangement and reorganization of the actin cytoskeleton. Regulates the activation of ITGB3, integrin signaling and cell adhesion. This chain is FERM, ARHGEF and pleckstrin domain-containing protein 2 (Farp2), found in Mus musculus (Mouse).